We begin with the raw amino-acid sequence, 356 residues long: MQTLHALLRDIPAPDAEAMARAQQHIDGLLKPPGSLGRLETLAVQLAGMPGLNGTPQVGEKAVLVMCADHGVWDEGVAVSPKIVTAIQAANMTQGTTGVCVLAAQAGAKVHVIDVGIDAEPIPGVVDMRVARGCGNIAVGPAMSRSQAEALLLEVSRYTCDLAKRGVTLFGVGELGMANTTPAAAMVSVFTGSDAKEVVGIGANLPPSRIDNKVDVVRRAIAINQPNPRDGIDVLSKVGGVDLVGMTGVMLGAARCGLPVLLDGFLSYSAALAACQIAPAVRPYLIPSHFSAEKGARIALAHLSMEPYLHMAMRLGEGSGAALAMPIVEAACAMFHNMGELAASNIVLPEGNANAT.

The active-site Proton acceptor is the Glu-317.

It belongs to the CobT family. As to quaternary structure, homodimer.

The catalysed reaction is 5,6-dimethylbenzimidazole + nicotinate beta-D-ribonucleotide = alpha-ribazole 5'-phosphate + nicotinate + H(+). Its pathway is nucleoside biosynthesis; alpha-ribazole biosynthesis; alpha-ribazole from 5,6-dimethylbenzimidazole: step 1/2. Catalyzes the synthesis of alpha-ribazole-5'-phosphate from nicotinate mononucleotide (NAMN) and 5,6-dimethylbenzimidazole (DMB). The protein is Nicotinate-nucleotide--dimethylbenzimidazole phosphoribosyltransferase of Salmonella paratyphi A (strain ATCC 9150 / SARB42).